The following is a 220-amino-acid chain: PRA1 family protein B4 (220 aa).

The interval Met-1–Ser-27 is disordered. The segment covering Ser-12–Ser-27 has biased composition (polar residues). A run of 5 helical transmembrane segments spans residues Tyr-83–Val-103, His-105–Phe-125, Gly-146–Val-166, Met-170–Leu-190, and Ala-196–Ile-216.

The protein belongs to the PRA1 family. Interacts with PRA1B1, PRA1B2, PRA1B3, PRA1B5, PRA1B6 and PRA1E. As to expression, expressed in roots, lateral roots, lateral root caps, stomata and trichomes.

The protein resides in the endosome membrane. Functionally, may be involved in both secretory and endocytic intracellular trafficking in the endosomal/prevacuolar compartments. This Arabidopsis thaliana (Mouse-ear cress) protein is PRA1 family protein B4 (PRA1B4).